We begin with the raw amino-acid sequence, 284 residues long: NAD kinase (284 aa).

Asp67 functions as the Proton acceptor in the catalytic mechanism. NAD(+)-binding positions include 67-68 (DG), 141-142 (ND), Arg152, Lys169, Asp171, 182-187 (TGYSLS), and Gln241.

This sequence belongs to the NAD kinase family. It depends on a divalent metal cation as a cofactor.

Its subcellular location is the cytoplasm. The enzyme catalyses NAD(+) + ATP = ADP + NADP(+) + H(+). In terms of biological role, involved in the regulation of the intracellular balance of NAD and NADP, and is a key enzyme in the biosynthesis of NADP. Catalyzes specifically the phosphorylation on 2'-hydroxyl of the adenosine moiety of NAD to yield NADP. The chain is NAD kinase from Geotalea daltonii (strain DSM 22248 / JCM 15807 / FRC-32) (Geobacter daltonii).